The primary structure comprises 294 residues: ATP synthase gamma chain (294 aa).

This sequence belongs to the ATPase gamma chain family. As to quaternary structure, F-type ATPases have 2 components, CF(1) - the catalytic core - and CF(0) - the membrane proton channel. CF(1) has five subunits: alpha(3), beta(3), gamma(1), delta(1), epsilon(1). CF(0) has three main subunits: a, b and c.

The protein resides in the cell inner membrane. In terms of biological role, produces ATP from ADP in the presence of a proton gradient across the membrane. The gamma chain is believed to be important in regulating ATPase activity and the flow of protons through the CF(0) complex. The sequence is that of ATP synthase gamma chain from Rhizobium etli (strain CIAT 652).